The chain runs to 66 residues: DNA-directed RNA polymerase subunit omega (66 aa).

It belongs to the RNA polymerase subunit omega family. In terms of assembly, the RNAP catalytic core consists of 2 alpha, 1 beta, 1 beta' and 1 omega subunit. When a sigma factor is associated with the core the holoenzyme is formed, which can initiate transcription.

The catalysed reaction is RNA(n) + a ribonucleoside 5'-triphosphate = RNA(n+1) + diphosphate. Its function is as follows. Promotes RNA polymerase assembly. Latches the N- and C-terminal regions of the beta' subunit thereby facilitating its interaction with the beta and alpha subunits. The protein is DNA-directed RNA polymerase subunit omega of Geobacillus kaustophilus (strain HTA426).